The following is a 318-amino-acid chain: NADH-ubiquinone oxidoreductase chain 1 (318 aa).

Helical transmembrane passes span 2-22 (PMIN…FLML), 69-89 (ALYI…WTPL), 100-120 (LGLL…LWSG), 147-167 (AIIL…TLIT), 171-191 (HIWL…STLA), 222-242 (LFFM…TMIF), 253-273 (ELYT…FLWI), and 294-314 (LPLT…IASI).

Belongs to the complex I subunit 1 family. In terms of assembly, core subunit of respiratory chain NADH dehydrogenase (Complex I) which is composed of 45 different subunits.

The protein localises to the mitochondrion inner membrane. It catalyses the reaction a ubiquinone + NADH + 5 H(+)(in) = a ubiquinol + NAD(+) + 4 H(+)(out). Core subunit of the mitochondrial membrane respiratory chain NADH dehydrogenase (Complex I) which catalyzes electron transfer from NADH through the respiratory chain, using ubiquinone as an electron acceptor. Essential for the catalytic activity and assembly of complex I. This is NADH-ubiquinone oxidoreductase chain 1 (MT-ND1) from Hylobates lar (Lar gibbon).